A 141-amino-acid polypeptide reads, in one-letter code: Galactose-6-phosphate isomerase subunit LacA (141 aa).

This sequence belongs to the LacAB/RpiB family. As to quaternary structure, heteromultimeric protein consisting of LacA and LacB.

The enzyme catalyses aldehydo-D-galactose 6-phosphate = keto-D-tagatose 6-phosphate. It participates in carbohydrate metabolism; D-galactose 6-phosphate degradation; D-tagatose 6-phosphate from D-galactose 6-phosphate: step 1/1. The polypeptide is Galactose-6-phosphate isomerase subunit LacA (Streptococcus pneumoniae serotype 2 (strain D39 / NCTC 7466)).